We begin with the raw amino-acid sequence, 314 residues long: Homoserine kinase (314 aa).

97–107 (PPARGMGSSAT) serves as a coordination point for ATP.

The protein belongs to the GHMP kinase family. Homoserine kinase subfamily.

The protein localises to the cytoplasm. The catalysed reaction is L-homoserine + ATP = O-phospho-L-homoserine + ADP + H(+). It participates in amino-acid biosynthesis; L-threonine biosynthesis; L-threonine from L-aspartate: step 4/5. Its function is as follows. Catalyzes the ATP-dependent phosphorylation of L-homoserine to L-homoserine phosphate. This is Homoserine kinase from Synechococcus sp. (strain RCC307).